Consider the following 155-residue polypeptide: 3-dehydroquinate dehydratase 1 (155 aa).

The active-site Proton acceptor is the Tyr28. Substrate is bound by residues Asn80, His86, and Asp93. His106 functions as the Proton donor in the catalytic mechanism. Substrate-binding positions include 107–108 and Arg117; that span reads VT.

It belongs to the type-II 3-dehydroquinase family. As to quaternary structure, homododecamer.

The catalysed reaction is 3-dehydroquinate = 3-dehydroshikimate + H2O. It functions in the pathway metabolic intermediate biosynthesis; chorismate biosynthesis; chorismate from D-erythrose 4-phosphate and phosphoenolpyruvate: step 3/7. Catalyzes a trans-dehydration via an enolate intermediate. This Bradyrhizobium diazoefficiens (strain JCM 10833 / BCRC 13528 / IAM 13628 / NBRC 14792 / USDA 110) protein is 3-dehydroquinate dehydratase 1 (aroQ1).